A 517-amino-acid chain; its full sequence is MPPPGKVPRKENLWLQCEWGSCSFVCSTMEKFFEHVTQHLQQHLHGSGEEEEEEEEDDPLEEEFSCLWQECGFCSLDSSADLIRHVYFHCYHTKLKQWGLQALQSQADLGPCILDFQSRNVIPDIPDHFLCLWEHCENSFDNPEWFYRHVEAHSLCCEYEAVGKDNPVVLCGWKGCTCTFKDRSKLREHLRSHTQEKVVACPTCGGMFANNTKFLDHIRRQTSLDQQHFQCSHCSKRFATERLLRDHMRNHVNHYKCPLCDMTCPLPSSLRNHMRFRHSEDRPFKCDCCDYSCKNLIDLQKHLDTHSEEPAYRCDFENCTFSARSLCSIKSHYRKVHEGDSEPRYKCHVCDKCFTRGNNLTVHLRKKHQFKWPSGHPRFRYKEHEDGYMRLQLVRYESVELTQQLLRQPQEGSGLGTSLNESSLQGIILETVPGEPGRKEEEEEGKGSEGTALSASQDNPSSVIHVVNQTNAQGQQEIVYYVLSEAPGEPPPAPEPPSGGIMEKLQGIAEEPEIQMV.

C2H2-type zinc fingers lie at residues leucine 15 to histidine 39, phenylalanine 129 to histidine 153, and valine 169 to histidine 193. A C2H2-type 4; degenerate zinc finger spans residues valine 199 to glutamine 221. 5 consecutive C2H2-type zinc fingers follow at residues phenylalanine 229–histidine 251, tyrosine 255–histidine 278, phenylalanine 284–histidine 306, tyrosine 312–histidine 337, and tyrosine 345–histidine 368. Positions proline 373–valine 517 are interaction with NPAT. A required for activation of histone H4 transcription and contributes to DNA-binding region spans residues serine 374–arginine 407. A disordered region spans residues threonine 431–proline 460. Positions threonine 451–proline 460 are enriched in polar residues.

As to quaternary structure, binds MBD2 and a histone deacetylase complex. Interacts with NPAT. Post-translationally, ubiquitinated. Ubiquitination may lead to proteasome-mediated degradation. In terms of tissue distribution, ubiquitous. Highly expressed in brain, heart, skeletal muscle, spleen, kidney, small intestine, placenta and liver.

Its subcellular location is the nucleus. Functionally, transcriptional repressor that binds to the consensus sequence 5'-CGGACGTT-3' and to the RB1 promoter. Transcriptional activator that promotes histone H4 gene transcription at the G1/S phase transition in conjunction with NPAT. Also activates transcription of the ATM and PRKDC genes. Autoregulates its expression by associating with its own promoter. The chain is Histone H4 transcription factor (HINFP) from Homo sapiens (Human).